Here is a 312-residue protein sequence, read N- to C-terminus: MPPRKAPAKRRSTDSGVERDRGALSQEKKDQRIALFLSDFDQQAKESIREMKKELDLLLQMAEKAFMVELLKMPTAIRKMKRKDLLNLQEGEEVALAAAATDCALEDVPSPKVTRTNSKKVKVTTIVEYEDAKYTSTKKIPKKVSKSKSLVSLSSGLNSKLHSLSRSVYSSTSVNEAVKTPASDCSATNFKAMPKVSKSAGLQQAVSRTVPTSERVQGMVLRSKSVPQDKMVPFVNIPLADGQTLCMAGGDLRNIDVQLLNQDTVQHIHNLVVSLNQQTCIPTHSSTLSCEINVPGADSSCVFLLRLRNTSD.

Over residues 1 to 10 (MPPRKAPAKR) the composition is skewed to basic residues. The interval 1 to 26 (MPPRKAPAKRRSTDSGVERDRGALSQ) is disordered. The span at 11–26 (RSTDSGVERDRGALSQ) shows a compositional bias: basic and acidic residues.

This sequence belongs to the borealin family. As to quaternary structure, component of the CPC complex.

It localises to the nucleus. The protein localises to the chromosome. The protein resides in the centromere. In terms of biological role, component of the chromosomal passenger complex (CPC), a complex that acts as a key regulator of mitosis. The CPC complex has essential functions at the centromere in ensuring correct chromosome alignment and segregation and is required for chromatin-induced microtubule stabilization and spindle assembly. The chain is Borealin-2 from Gallus gallus (Chicken).